The following is a 393-amino-acid chain: Cytochrome b (393 aa).

At 1–33 (MTIRNQRFSLLKQPISSTLNQHLVDYPTPSNLS) the chain is on the mitochondrial matrix side. The helical transmembrane segment at 34–57 (YWWGFGSLAGICLVIQIVTGVFLA) threads the bilayer. The Mitochondrial intermembrane segment spans residues 58–80 (MHYTPHVDLAFNSVEHIMRDVEG). The helical transmembrane segment at 81-108 (GWLLRYMHANGASMFFIVVYLHIFRGLY) threads the bilayer. Heme b-binding residues include histidine 88 and histidine 102. Topologically, residues 109–116 (YASYSSPR) are mitochondrial matrix. The helical transmembrane segment at 117–141 (EFVWCLGVVIFLLMIVTAFIGYVLP) threads the bilayer. Topologically, residues 142 to 178 (WGQMSFWGATVITSLASAIPVVGDTIVTWLWGGFSVD) are mitochondrial intermembrane. The chain crosses the membrane as a helical span at residues 179-210 (NATLNRFFSLHYLLPFILVGASLLHLAALHQY). The heme b site is built by histidine 189 and histidine 203. Residue histidine 208 coordinates a ubiquinone. Residues 211 to 229 (GSNNPLGVHSEMDKIAFYP) are Mitochondrial matrix-facing. Residues 230 to 252 (YFYVKDLVGWVAFAIFFSIWIFY) traverse the membrane as a helical segment. Over 253-293 (APNVLGHPDNYIPANPMSTPPHIVPEWYFLPIYAILRSIPD) the chain is Mitochondrial intermembrane. A helical membrane pass occupies residues 294 to 314 (KAGGVAAIALVFICLLALPFF). The Mitochondrial matrix segment spans residues 315-325 (KSMYVRSSSFR). Residues 326 to 346 (PIYQGMFWLLLADCLLLGWIG) traverse the membrane as a helical segment. The Mitochondrial intermembrane portion of the chain corresponds to 347–353 (CQPVEAP). The chain crosses the membrane as a helical span at residues 354–370 (FVTIGQISSLVFFLFFA). The Mitochondrial matrix portion of the chain corresponds to 371-393 (ITPILGRVGRGIPNSYTDETDHT).

Belongs to the cytochrome b family. Component of the ubiquinol-cytochrome c oxidoreductase (cytochrome b-c1 complex, complex III, CIII), a multisubunit enzyme composed of 10 subunits. The complex is composed of 3 respiratory subunits cytochrome b (MT-CYB), cytochrome c1 (CYC1-1 or CYC1-2) and Rieske protein (UCR1-1 or UCR1-2), 2 core protein subunits MPPalpha1 (or MPPalpha2) and MPPB, and 5 low-molecular weight protein subunits QCR7-1 (or QCR7-2), UCRQ-1 (or UCRQ-2), QCR9, UCRY and probably QCR6-1 (or QCR6-2). The complex exists as an obligatory dimer and forms supercomplexes (SCs) in the inner mitochondrial membrane with NADH-ubiquinone oxidoreductase (complex I, CI), resulting in different assemblies (supercomplexes SCI(1)III(2) and SCI(2)III(4)). Heme b is required as a cofactor.

The protein localises to the mitochondrion inner membrane. Functionally, component of the ubiquinol-cytochrome c oxidoreductase, a multisubunit transmembrane complex that is part of the mitochondrial electron transport chain which drives oxidative phosphorylation. The respiratory chain contains 3 multisubunit complexes succinate dehydrogenase (complex II, CII), ubiquinol-cytochrome c oxidoreductase (cytochrome b-c1 complex, complex III, CIII) and cytochrome c oxidase (complex IV, CIV), that cooperate to transfer electrons derived from NADH and succinate to molecular oxygen, creating an electrochemical gradient over the inner membrane that drives transmembrane transport and the ATP synthase. The cytochrome b-c1 complex catalyzes electron transfer from ubiquinol to cytochrome c, linking this redox reaction to translocation of protons across the mitochondrial inner membrane, with protons being carried across the membrane as hydrogens on the quinol. In the process called Q cycle, 2 protons are consumed from the matrix, 4 protons are released into the intermembrane space and 2 electrons are passed to cytochrome c. Cytochrome b is a catalytic core subunit containing 2 b-type hemes BL and BH topographically segregated in the quinone reduction (Qi) and quinol oxidation (Q0) sites on opposite sides of the membrane. This Arabidopsis thaliana (Mouse-ear cress) protein is Cytochrome b (MT-CYB).